The chain runs to 359 residues: Archaemetzincin-2 (359 aa).

Residue H254 coordinates Zn(2+). The active-site Proton acceptor is the E255. Zn(2+) is bound by residues H258, H264, C265, C270, C289, and C292.

It belongs to the peptidase M54 family. The cofactor is Zn(2+). As to expression, predominantly expressed in testis.

Its function is as follows. Probable zinc metalloprotease. This is Archaemetzincin-2 (Amz2) from Mus musculus (Mouse).